The following is a 266-amino-acid chain: Zinc finger protein CG30 (266 aa).

An RING-type zinc finger spans residues 8–63; the sequence is CNICFSVAEIKNYFMQPIDRLTMIPVLELDTCKHQLCSMCIRKIRKRKKTPCPLCR.

It localises to the host nucleus. In terms of biological role, plays a role in the proper expression of late and very late genes. This chain is Zinc finger protein CG30 (CG30), found in Bombyx mori nuclear polyhedrosis virus (BmNPV).